Here is a 489-residue protein sequence, read N- to C-terminus: MVSNMRVLRVLRLTGWVGIFLVLSLQQTSCAGLPHNVDTHHILTFNPSPISADGVPLSEVPNSPTTELSTTVATKTAVPTTESTSSSEAHRNSSHKIPDIICDREEVFVFLNNTGRILCDLIVDPPSDDEWSNFALDVTFNPIEYHANEKNVEVARVAGLYGVPGSDYAYPRKSELISSIRRDPQGSFWTSPTPRGNKYFIWINKTMHTMGVEVRNVDYKDNGYFQVILRDRFNRPLVEKHIYMRVCQRPASVDVLAPPVLSGENYKASCIVRHFYPPGSVYVSWRRNGNIATPRKDRDGSFWWFESGRGATLVSTITLGNSGLESPPKVSCLVAWRQGDMISTSNATAVPTVYYHPRISLAFKDGYAICTIECVPSGITVRWLVHDEPQPNTTYDTVVTGLCRTIDRYRNLASRIPVQDNWAKTKYTCRLIGYPFDVDRFQNSEYYDATPSARGMPMIVTITAVLGLALFLGIGIIITALCFYLPGRN.

A signal peptide spans Met-1–Gly-32. At Leu-33–Gly-455 the chain is on the virion surface side. Residues Glu-59 to Ser-94 are disordered. A compositionally biased stretch (polar residues) spans Val-60–Ser-69. Positions Thr-70 to Thr-81 are enriched in low complexity. Residues Asn-92, Asn-112, Asn-204, Asn-346, and Asn-392 are each glycosylated (N-linked (GlcNAc...) asparagine; by host). The Ig-like domain occupies Pro-250–Thr-348. A helical membrane pass occupies residues Met-456–Pro-486. The Cytoplasmic portion of the chain corresponds to Gly-487–Asn-489.

The protein belongs to the herpesviridae glycoprotein C family.

It localises to the virion membrane. This Gallus gallus (Chicken) protein is Envelope glycoprotein C homolog (gC).